The following is a 157-amino-acid chain: 2-C-methyl-D-erythritol 2,4-cyclodiphosphate synthase (157 aa).

2 residues coordinate a divalent metal cation: aspartate 8 and histidine 10. 4-CDP-2-C-methyl-D-erythritol 2-phosphate contacts are provided by residues 8–10 (DVH) and 34–35 (HS). Histidine 42 is an a divalent metal cation binding site. 4-CDP-2-C-methyl-D-erythritol 2-phosphate-binding positions include 56–58 (DIG), 61–65 (FPDTD), 132–135 (TTEE), and phenylalanine 139.

It belongs to the IspF family. Homotrimer. The cofactor is a divalent metal cation.

It catalyses the reaction 4-CDP-2-C-methyl-D-erythritol 2-phosphate = 2-C-methyl-D-erythritol 2,4-cyclic diphosphate + CMP. It functions in the pathway isoprenoid biosynthesis; isopentenyl diphosphate biosynthesis via DXP pathway; isopentenyl diphosphate from 1-deoxy-D-xylulose 5-phosphate: step 4/6. In terms of biological role, involved in the biosynthesis of isopentenyl diphosphate (IPP) and dimethylallyl diphosphate (DMAPP), two major building blocks of isoprenoid compounds. Catalyzes the conversion of 4-diphosphocytidyl-2-C-methyl-D-erythritol 2-phosphate (CDP-ME2P) to 2-C-methyl-D-erythritol 2,4-cyclodiphosphate (ME-CPP) with a corresponding release of cytidine 5-monophosphate (CMP). The chain is 2-C-methyl-D-erythritol 2,4-cyclodiphosphate synthase from Clostridium botulinum (strain Alaska E43 / Type E3).